The primary structure comprises 50 residues: Large ribosomal subunit protein bL32c (50 aa).

Belongs to the bacterial ribosomal protein bL32 family.

Its subcellular location is the plastid. The chain is Large ribosomal subunit protein bL32c (rpl32) from Euglena longa (Euglenophycean alga).